An 80-amino-acid polypeptide reads, in one-letter code: Sulfur carrier protein TusA (80 aa).

C17 acts as the Cysteine persulfide intermediate in catalysis.

It belongs to the sulfur carrier protein TusA family.

It is found in the cytoplasm. In terms of biological role, sulfur carrier protein which probably makes part of a sulfur-relay system. In Pseudomonas entomophila (strain L48), this protein is Sulfur carrier protein TusA.